The following is a 182-amino-acid chain: UPF0149 protein PM1723 (182 aa).

It belongs to the UPF0149 family.

In Pasteurella multocida (strain Pm70), this protein is UPF0149 protein PM1723.